The chain runs to 79 residues: Small ribosomal subunit protein bS16 (79 aa).

It belongs to the bacterial ribosomal protein bS16 family.

This Desulfovibrio desulfuricans (strain ATCC 27774 / DSM 6949 / MB) protein is Small ribosomal subunit protein bS16.